The following is a 534-amino-acid chain: Peptide chain release factor 3 (534 aa).

In terms of domain architecture, tr-type G spans 9–278 (ARRRTFAIIS…FFIEHAPPPQ (270 aa)). GTP is bound by residues 18-25 (SHPDAGKT), 86-90 (DTPGH), and 140-143 (NKLD).

Belongs to the TRAFAC class translation factor GTPase superfamily. Classic translation factor GTPase family. PrfC subfamily.

The protein localises to the cytoplasm. Its function is as follows. Increases the formation of ribosomal termination complexes and stimulates activities of RF-1 and RF-2. It binds guanine nucleotides and has strong preference for UGA stop codons. It may interact directly with the ribosome. The stimulation of RF-1 and RF-2 is significantly reduced by GTP and GDP, but not by GMP. The polypeptide is Peptide chain release factor 3 (Xanthomonas oryzae pv. oryzae (strain MAFF 311018)).